A 1287-amino-acid chain; its full sequence is Rho GTPase-activating protein 33 (1287 aa).

A disordered region spans residues 1-40; the sequence is MVARSTDSLDGPGEGSVQPLPTAGGPSVKGKPGKRLSAPR. At S8 the chain carries Phosphoserine. Residues 59–168 enclose the PX; atypical domain; that stretch reads FGHIQLLLSP…CGPVLTWMEL (110 aa). The SH3 domain maps to 186-248; it reads PAVAAAHVIK…PSECVELFTE (63 aa). In terms of domain architecture, Rho-GAP spans 315-510; sequence CDLGEHLSNS…FLLTHVDVLF (196 aa). Disordered stretches follow at residues 551 to 792, 813 to 832, 859 to 1030, 1056 to 1075, 1090 to 1134, and 1146 to 1287; these read RTQG…SPAA, AGGA…GRSL, KLRG…VPTP, GPPS…SLGP, GASE…SPDF, and PPDH…RSYC. The segment covering 558 to 571 has biased composition (low complexity); the sequence is TPTEPTTPKAPASP. S570 bears the Phosphoserine mark. The segment covering 572 to 584 has biased composition (basic and acidic residues); the sequence is AERRKGERGEKQR. The segment covering 622–645 has biased composition (polar residues); sequence SGSRPDTVTLRSAKSEESLSSQAS. Position 636 is a phosphoserine (S636). Residues 672-709 are compositionally biased toward low complexity; sequence AGSCESLSSSSSSESSSSESSSSSSESSAAGLGALSGS. Position 727 is a phosphoserine (S727). Positions 752–766 are enriched in pro residues; it reads PGDPAPPASPAPPAP. 2 stretches are compositionally biased toward low complexity: residues 813–829 and 896–919; these read AGGA…LSPG and PARL…SQQE. 2 stretches are compositionally biased toward polar residues: residues 972–981 and 1019–1028; these read RQQSDGSLLR and SPCSVPSQVP. A Phosphotyrosine modification is found at Y1169. Positions 1175 to 1189 are enriched in low complexity; it reads GPRGPSPASSSSSSP. The residue at position 1244 (R1244) is an Omega-N-methylarginine. Polar residues predominate over residues 1274–1287; the sequence is SWSLHSEGQTRSYC.

This sequence belongs to the PX domain-containing GAP family. Specifically interacts with CDC42 and RHOQ/TC10 through its Rho-GAP domain. Interacts with NEK6.

Functionally, may be involved in several stages of intracellular trafficking. Could play an important role in the regulation of glucose transport by insulin. May act as a downstream effector of RHOQ/TC10 in the regulation of insulin-stimulated glucose transport. The polypeptide is Rho GTPase-activating protein 33 (ARHGAP33) (Homo sapiens (Human)).